The primary structure comprises 259 residues: MKEHKARKRFGQNFLQDTRIISDIVNAVRPQADDVVIEIGPGLAAITEPLAKKLNRLHVVEIDRDIVCRLKTLPFADKLVIHEGDVLQFDFNGIAGKKKIVGNLPYNISTPLLFKLAEVADDVVDMHFMLQKEVVERMVAAPKSNDYGRLGVMLQYFFDMEMLIDVPPESFDPAPKVDSAVVRMIPVKHRIGKADDFEHFAKLVKLAFHQRRKTIRNNLKELAGDDDLQAVGINPQDRAEHIAPEKYVALSNYLAGKVV.

Residues Asn-13, Leu-15, Gly-40, Glu-61, Asp-85, and Asn-103 each contribute to the S-adenosyl-L-methionine site.

It belongs to the class I-like SAM-binding methyltransferase superfamily. rRNA adenine N(6)-methyltransferase family. RsmA subfamily.

It localises to the cytoplasm. The enzyme catalyses adenosine(1518)/adenosine(1519) in 16S rRNA + 4 S-adenosyl-L-methionine = N(6)-dimethyladenosine(1518)/N(6)-dimethyladenosine(1519) in 16S rRNA + 4 S-adenosyl-L-homocysteine + 4 H(+). Functionally, specifically dimethylates two adjacent adenosines (A1518 and A1519) in the loop of a conserved hairpin near the 3'-end of 16S rRNA in the 30S particle. May play a critical role in biogenesis of 30S subunits. The sequence is that of Ribosomal RNA small subunit methyltransferase A from Neisseria meningitidis serogroup B (strain ATCC BAA-335 / MC58).